We begin with the raw amino-acid sequence, 827 residues long: Leucine--tRNA ligase (827 aa).

Positions 46–56 match the 'HIGH' region motif; the sequence is PYPSGRIHMGH. The short motif at 585–589 is the 'KMSKS' region element; that stretch reads KMSKS. ATP is bound at residue lysine 588.

This sequence belongs to the class-I aminoacyl-tRNA synthetase family.

Its subcellular location is the cytoplasm. It carries out the reaction tRNA(Leu) + L-leucine + ATP = L-leucyl-tRNA(Leu) + AMP + diphosphate. This is Leucine--tRNA ligase from Desulfotalea psychrophila (strain LSv54 / DSM 12343).